The chain runs to 395 residues: MAAEASESGPALHELMREAEISLLECKVCFEKFGHRQQRRPRNLSCGHVVCLACVAALAHPRTLALECPFCRRACRGCDTSDCLPVLHLIELLGSALRQSPAAHRAAPSAPGALTCHHTFGGWGTLVNPTGLALCPKTGRVVVVHDGRRRVKIFDSGGGCAHQFGEKGDAAQDIRYPVDVTITNDCHVVVTDAGDRSIKVFDFFGQIKLVIGGQFSLPWGVETTPQNGIVVTDAEAGSLHLLDVDFAEGVLRRTERLQAHLCNPRGVAVSWLTGAIAVLEHPLALGTGVCSTRVKVFSSSMQLVGQVDTFGLSLYFPSKITASAVTFDHQGNVIVADTSGPAILCLGKPEEFPVPKPMVTHGLSHPVALTFTKENSLLVLDTASHSIKVYKVDWG.

An RING-type zinc finger spans residues 26-72 (CKVCFEKFGHRQQRRPRNLSCGHVVCLACVAALAHPRTLALECPFCR). 6 NHL repeats span residues 113–157 (ALTC…FDSG), 161–204 (AHQF…FDFF), 205–245 (GQIK…LDVD), 248–300 (EGVL…FSSS), 301–349 (MQLV…LGKP), and 350–393 (EEFP…YKVD).

Interacts with AGL. Interacts (via the NHL repeats) with EPM2A/laforin. Forms a complex with EPM2A/laforin and HSP70. Interacts with PRDM8. In terms of tissue distribution, expressed in brain, cerebellum, spinal cord, medulla, heart, liver, skeletal muscle and pancreas.

Its subcellular location is the endoplasmic reticulum. The protein localises to the nucleus. It catalyses the reaction S-ubiquitinyl-[E2 ubiquitin-conjugating enzyme]-L-cysteine + [acceptor protein]-L-lysine = [E2 ubiquitin-conjugating enzyme]-L-cysteine + N(6)-ubiquitinyl-[acceptor protein]-L-lysine.. It participates in protein modification; protein ubiquitination. E3 ubiquitin-protein ligase. Together with the phosphatase EPM2A/laforin, appears to be involved in the clearance of toxic polyglucosan and protein aggregates via multiple pathways. In complex with EPM2A/laforin and HSP70, suppresses the cellular toxicity of misfolded proteins by promoting their degradation through the ubiquitin-proteasome system (UPS). Ubiquitinates the glycogen-targeting protein phosphatase subunits PPP1R3C/PTG and PPP1R3D in a laforin-dependent manner and targets them for proteasome-dependent degradation, thus decreasing glycogen accumulation. Polyubiquitinates EPM2A/laforin and ubiquitinates AGL and targets them for proteasome-dependent degradation. Also promotes proteasome-independent protein degradation through the macroautophagy pathway. In Homo sapiens (Human), this protein is E3 ubiquitin-protein ligase NHLRC1 (NHLRC1).